A 118-amino-acid chain; its full sequence is NIVLTQPESAVKKPGESHKLSCTVSGFDVNGHHMNWVKQVPGEGLEWLLSYRKTYNTYYASGIQGRITFSTESSTTFIEIPNLRVEDTAMYYCARGTGFPQWGYWGSGTFLTVTSVTQ.

The Ig-like domain occupies 1–109 (NIVLTQPESA…PQWGYWGSGT (109 aa)). Cysteines 22 and 93 form a disulfide.

As to expression, expressed mainly in lymphoid tissues including spleen, epigonal organ and circulating lymphocytes.

In Heterodontus francisci (Horn shark), this protein is IgW heavy chain V region W26.